A 146-amino-acid polypeptide reads, in one-letter code: MKLHELKPAEGSRKVRNRVGRGIGSGNGKTAGKGHKGQNARSGGGVRLGFEGGQTPLFRRLPKRGFTNINRKEFAIVNLAALNRFEDGTEVTPELLLETGVISKLNDGVKVLASGAVEKKLTVKAHKFSSSAKEAIEAAGGTVEVI.

Over residues M1–R13 the composition is skewed to basic and acidic residues. The disordered stretch occupies residues M1–L48. Over residues R21–A31 the composition is skewed to gly residues.

The protein belongs to the universal ribosomal protein uL15 family. As to quaternary structure, part of the 50S ribosomal subunit.

Functionally, binds to the 23S rRNA. The polypeptide is Large ribosomal subunit protein uL15 (Bacillus cytotoxicus (strain DSM 22905 / CIP 110041 / 391-98 / NVH 391-98)).